A 259-amino-acid chain; its full sequence is Polycomb group RING finger protein 1 (259 aa).

A2 carries the post-translational modification N-acetylalanine. S3 carries the phosphoserine modification. A Glycyl lysine isopeptide (Lys-Gly) (interchain with G-Cter in SUMO2) cross-link involves residue K24. The RING-type zinc finger occupies 47–86; that stretch reads CCLCAGYFVDATTITECLHTFCKSCIVKYLQTSKYCPMCN. The necessary for repressor activity stretch occupies residues 86–247; that stretch reads NIKIHETQPL…LSHWFGKPSP (162 aa). K88 is covalently cross-linked (Glycyl lysine isopeptide (Lys-Gly) (interchain with G-Cter in SUMO2)). The tract at residues 150–255 is required for the interaction with the KDM2B-SKP1 heterodimeric complex; it reads LPFSSFDHSK…SPLLLQYSVK (106 aa). Positions 167 to 255 are RING-finger and WD40-associated ubiquitin-like domain (RAWUL); sufficient for interaction with BCOR and BCORL1; that stretch reads EQLSLCLERL…SPLLLQYSVK (89 aa).

Interacts with BCORL1, forming heterodimers. The PCGF1-BCORL1 heterodimeric complex interacts with the KDM2B-SKP1 heterodimeric complex to form a homotetrameric polycomb repression complex 1 (PRC1.1). Component of the repressive BCOR complex containing a Polycomb group subcomplex at least composed of RYBP, RING1 and RNF2/RING2. Specifically interacts with BCOR, RING1 and RNF2/RING2. Component of a PRC1-like complex. Interacts with CBX6, CBX7 and CBX8. Interacts with DPPA4, NANOG, POU5F1 and RYBP.

The protein resides in the nucleus. Its function is as follows. Component of the Polycomb group (PcG) multiprotein BCOR complex, a complex required to maintain the transcriptionally repressive state of some genes, such as BCL6 and the cyclin-dependent kinase inhibitor, CDKN1A. Transcriptional repressor that may be targeted to the DNA by BCL6; this transcription repressor activity may be related to PKC signaling pathway. Represses CDKN1A expression by binding to its promoter, and this repression is dependent on the retinoic acid response element (RARE element). Promotes cell cycle progression and enhances cell proliferation as well. May have a positive role in tumor cell growth by down-regulating CDKN1A. Component of a Polycomb group (PcG) multiprotein PRC1-like complex, a complex class required to maintain the transcriptionally repressive state of many genes, including Hox genes, throughout development. PcG PRC1 complex acts via chromatin remodeling and modification of histones; it mediates monoubiquitination of histone H2A 'Lys-119', rendering chromatin heritably changed in its expressibility. Within the PRC1-like complex, regulates RNF2 ubiquitin ligase activity. Regulates the expression of DPPA4 and NANOG in the NT2 embryonic carcinoma cells. The protein is Polycomb group RING finger protein 1 (PCGF1) of Bos taurus (Bovine).